Here is a 318-residue protein sequence, read N- to C-terminus: Deoxyribose-phosphate aldolase (318 aa).

The Proton donor/acceptor role is filled by Asp-155. Residue Lys-218 is the Schiff-base intermediate with acetaldehyde of the active site. The active-site Proton donor/acceptor is Lys-254.

Belongs to the DeoC/FbaB aldolase family. DeoC type 2 subfamily. As to quaternary structure, interacts with YBX1.

The protein resides in the cytoplasm. The protein localises to the cytoplasmic granule. It localises to the nucleus. It catalyses the reaction 2-deoxy-D-ribose 5-phosphate = D-glyceraldehyde 3-phosphate + acetaldehyde. It participates in carbohydrate degradation; 2-deoxy-D-ribose 1-phosphate degradation; D-glyceraldehyde 3-phosphate and acetaldehyde from 2-deoxy-alpha-D-ribose 1-phosphate: step 2/2. Its function is as follows. Catalyzes a reversible aldol reaction between acetaldehyde and D-glyceraldehyde 3-phosphate to generate 2-deoxy-D-ribose 5-phosphate. Participates in stress granule (SG) assembly. May allow ATP production from extracellular deoxyinosine in conditions of energy deprivation. The polypeptide is Deoxyribose-phosphate aldolase (DERA) (Bos taurus (Bovine)).